The following is a 63-amino-acid chain: Beta-defensin 5 (63 aa).

A signal peptide spans 1-22 (MRIHYLLFSFLLVLLSPLSVFT). Pyrrolidone carboxylic acid is present on glutamine 23. Disulfide bonds link cysteine 31-cysteine 59, cysteine 38-cysteine 52, and cysteine 42-cysteine 60.

It belongs to the beta-defensin family.

The protein resides in the secreted. Has antibacterial activity. The protein is Beta-defensin 5 (Defb5) of Rattus norvegicus (Rat).